The sequence spans 487 residues: DEAD-box ATP-dependent RNA helicase CshA (487 aa).

A Q motif motif is present at residues 3–31 (ITFQDFQLSSDLTKAIKRMGFEEATPIQA). One can recognise a Helicase ATP-binding domain in the interval 34–204 (IPLGLANKDV…ERFMTNPEHV (171 aa)). Position 47–54 (47–54 (AQTGTGKT)) interacts with ATP. The DEAD box signature appears at 152–155 (DEAD). Positions 215 to 375 (NIQQFYLEVH…RMKAPTLDEA (161 aa)) constitute a Helicase C-terminal domain. Basic and acidic residues predominate over residues 428–440 (DNTPVRLTEEAPL). Residues 428-487 (DNTPVRLTEEAPLRTKRNKNHHHRSSKRRDGGGYRGKNNRSSYDKKRSSNDRRQKKSYNS) form a disordered region. A compositionally biased stretch (basic residues) spans 441-454 (RTKRNKNHHHRSSK). Over residues 469–479 (SYDKKRSSNDR) the composition is skewed to basic and acidic residues.

This sequence belongs to the DEAD box helicase family. CshA subfamily. As to quaternary structure, oligomerizes, may be a member of the RNA degradosome.

The protein localises to the cytoplasm. It carries out the reaction ATP + H2O = ADP + phosphate + H(+). In terms of biological role, DEAD-box RNA helicase possibly involved in RNA degradation. Unwinds dsRNA in both 5'- and 3'-directions, has RNA-dependent ATPase activity. In Bacillus licheniformis (strain ATCC 14580 / DSM 13 / JCM 2505 / CCUG 7422 / NBRC 12200 / NCIMB 9375 / NCTC 10341 / NRRL NRS-1264 / Gibson 46), this protein is DEAD-box ATP-dependent RNA helicase CshA.